The primary structure comprises 381 residues: Galactose-1-phosphate uridylyltransferase (381 aa).

The Zn(2+) site is built by Cys-65 and Cys-68. 90 to 91 is a UDP-alpha-D-glucose binding site; sequence ND. His-131 contributes to the Zn(2+) binding site. Asn-175 contributes to the UDP-alpha-D-glucose binding site. His-186 is a binding site for Zn(2+). Catalysis depends on His-188, which acts as the Tele-UMP-histidine intermediate. A UDP-alpha-D-glucose-binding site is contributed by Gln-190. Positions 204, 306, 323, and 325 each coordinate Fe cation. UDP-alpha-D-glucose contacts are provided by residues 338–341 and 343–344; these read KFMV and FE.

This sequence belongs to the galactose-1-phosphate uridylyltransferase type 1 family. In terms of assembly, homodimer. Requires Zn(2+) as cofactor.

The catalysed reaction is alpha-D-galactose 1-phosphate + UDP-alpha-D-glucose = alpha-D-glucose 1-phosphate + UDP-alpha-D-galactose. It functions in the pathway carbohydrate metabolism; galactose metabolism. The polypeptide is Galactose-1-phosphate uridylyltransferase (GAL7) (Cryptococcus neoformans var. neoformans serotype D (strain B-3501A) (Filobasidiella neoformans)).